A 103-amino-acid polypeptide reads, in one-letter code: Pyrimidine/purine nucleoside phosphorylase (103 aa).

This sequence belongs to the nucleoside phosphorylase PpnP family.

The enzyme catalyses a purine D-ribonucleoside + phosphate = a purine nucleobase + alpha-D-ribose 1-phosphate. The catalysed reaction is adenosine + phosphate = alpha-D-ribose 1-phosphate + adenine. It carries out the reaction cytidine + phosphate = cytosine + alpha-D-ribose 1-phosphate. It catalyses the reaction guanosine + phosphate = alpha-D-ribose 1-phosphate + guanine. The enzyme catalyses inosine + phosphate = alpha-D-ribose 1-phosphate + hypoxanthine. The catalysed reaction is thymidine + phosphate = 2-deoxy-alpha-D-ribose 1-phosphate + thymine. It carries out the reaction uridine + phosphate = alpha-D-ribose 1-phosphate + uracil. It catalyses the reaction xanthosine + phosphate = alpha-D-ribose 1-phosphate + xanthine. Functionally, catalyzes the phosphorolysis of diverse nucleosides, yielding D-ribose 1-phosphate and the respective free bases. Can use uridine, adenosine, guanosine, cytidine, thymidine, inosine and xanthosine as substrates. Also catalyzes the reverse reactions. In Shewanella sp. (strain W3-18-1), this protein is Pyrimidine/purine nucleoside phosphorylase.